Reading from the N-terminus, the 211-residue chain is Large ribosomal subunit protein bL25 (211 aa).

Positions 186 to 211 (GRALQSMDAAESAVEQPGEQPATAAG) are disordered.

This sequence belongs to the bacterial ribosomal protein bL25 family. CTC subfamily. As to quaternary structure, part of the 50S ribosomal subunit; part of the 5S rRNA/L5/L18/L25 subcomplex. Contacts the 5S rRNA. Binds to the 5S rRNA independently of L5 and L18.

Functionally, this is one of the proteins that binds to the 5S RNA in the ribosome where it forms part of the central protuberance. The protein is Large ribosomal subunit protein bL25 of Gloeobacter violaceus (strain ATCC 29082 / PCC 7421).